The chain runs to 541 residues: Eukaryotic translation initiation factor 3 subunit D-1 (541 aa).

Residues 98–136 (VQKPPHQRGRFRNMRGRGGRGRNPRGGLNNHHHHGMTTL) form a disordered region. Residues 100–120 (KPPHQRGRFRNMRGRGGRGRN) are compositionally biased toward basic residues.

Belongs to the eIF-3 subunit D family. Component of the eukaryotic translation initiation factor 3 (eIF-3) complex. The eIF-3 complex interacts with pix.

It localises to the cytoplasm. In terms of biological role, mRNA cap-binding component of the eukaryotic translation initiation factor 3 (eIF-3) complex, which is involved in protein synthesis of a specialized repertoire of mRNAs and, together with other initiation factors, stimulates binding of mRNA and methionyl-tRNAi to the 40S ribosome. The eIF-3 complex specifically targets and initiates translation of a subset of mRNAs involved in cell proliferation. In the eIF-3 complex, eif3d specifically recognizes and binds the 7-methylguanosine cap of a subset of mRNAs. The protein is Eukaryotic translation initiation factor 3 subunit D-1 of Drosophila persimilis (Fruit fly).